Consider the following 374-residue polypeptide: Lactoyl-CoA dehydratase subunit beta (374 aa).

The protein belongs to the FldB/FldC dehydratase alpha/beta subunit family. Heterodimer of an alpha (LcdA) and a beta (LcdB) subunit. Requires [4Fe-4S] cluster as cofactor. FMN is required as a cofactor. It depends on riboflavin as a cofactor. Mg(2+) serves as cofactor.

It carries out the reaction (R)-lactoyl-CoA = acryloyl-CoA + H2O. The enzyme catalyses (2R)-hydroxybutanoyl-CoA = (2E)-butenoyl-CoA + H2O. With respect to regulation, activated by the LcdC protein. Its function is as follows. Involved in the acrylate pathway for the conversion of D-lactic acid to propionic acid. Catalyzes the reversible dehydration of Lactoyl-CoA and 2-hydroxybutyroyl-CoA to acryloyl-CoA and crotonyl-CoA, respectively. The polypeptide is Lactoyl-CoA dehydratase subunit beta (lcdB) (Anaerotignum propionicum (Clostridium propionicum)).